The chain runs to 314 residues: uncharacterized protein (314 aa).

Transmembrane regions (helical) follow at residues 23-43 (LALG…MALF) and 98-118 (MASG…GPLT). Gly residues predominate over residues 165–184 (GLGSGAGGGDVGGGGAGGTT). The disordered stretch occupies residues 165–314 (GLGSGAGGGD…APDEKTDAGE (150 aa)). The segment covering 190 to 202 (GPPPVPTSSPPTT) has biased composition (pro residues). Low complexity-rich tracts occupy residues 203–212 (PAGAPTKSAT) and 219–232 (ASPA…AGMP). The chain crosses the membrane as a helical span at residues 221-241 (PASAHMGAAGMPMVPPGAMGA). Positions 294 to 314 (LLPEHKDFGRIAPDEKTDAGE) are enriched in basic and acidic residues.

It is found in the cell membrane. This is an uncharacterized protein from Mycobacterium tuberculosis (strain ATCC 25618 / H37Rv).